Reading from the N-terminus, the 137-residue chain is Transcription antitermination protein NusB (137 aa).

Belongs to the NusB family.

In terms of biological role, involved in transcription antitermination. Required for transcription of ribosomal RNA (rRNA) genes. Binds specifically to the boxA antiterminator sequence of the ribosomal RNA (rrn) operons. The sequence is that of Transcription antitermination protein NusB from Haemophilus ducreyi (strain 35000HP / ATCC 700724).